A 609-amino-acid polypeptide reads, in one-letter code: Hemagglutinin/proteinase (609 aa).

Positions 1-24 are cleaved as a signal peptide; it reads MKMIQRPLNWLVLAGAATGFPLYA. Positions 25-196 are excised as a propeptide; that stretch reads AQMVTIDDAS…LDQWDGINHA (172 aa). His-343 provides a ligand contact to Zn(2+). Residue Glu-344 is part of the active site. 2 residues coordinate Zn(2+): His-347 and Glu-367. His-426 (proton donor) is an active-site residue.

It belongs to the peptidase M4 family. It depends on Zn(2+) as a cofactor.

The protein resides in the secreted. In terms of biological role, may play a role in the pathogenesis of cholera. Hap nicks and activates the A subunit of cholera enterotoxin and related enterotoxins. The polypeptide is Hemagglutinin/proteinase (hap) (Vibrio cholerae serotype O1 (strain ATCC 39315 / El Tor Inaba N16961)).